The sequence spans 506 residues: Mitogen-activated protein kinase 13 (506 aa).

The Protein kinase domain maps to 13–304 (YQIQEVVGKG…AEEALADPYF (292 aa)). ATP is bound by residues 19–27 (VGKGSYGVV) and lysine 42. The active-site Proton acceptor is aspartate 139. Residue threonine 175 is modified to Phosphothreonine. Residues 175–177 (TDY) carry the TXY motif. The residue at position 177 (tyrosine 177) is a Phosphotyrosine. The tract at residues 384 to 421 (YSRGERSTPLRRQHASLPRERVCSSVDSNNQDSDNEER) is disordered.

Belongs to the protein kinase superfamily. CMGC Ser/Thr protein kinase family. MAP kinase subfamily. Dually phosphorylated on Thr-175 and Tyr-177, which activates the enzyme.

It catalyses the reaction L-seryl-[protein] + ATP = O-phospho-L-seryl-[protein] + ADP + H(+). The enzyme catalyses L-threonyl-[protein] + ATP = O-phospho-L-threonyl-[protein] + ADP + H(+). Activated by threonine and tyrosine phosphorylation. In Oryza sativa subsp. indica (Rice), this protein is Mitogen-activated protein kinase 13 (MPK13).